Here is a 587-residue protein sequence, read N- to C-terminus: Aspartate--tRNA ligase (587 aa).

Glutamate 174 is an L-aspartate binding site. The aspartate stretch occupies residues 198–201 (QITK). L-aspartate is bound at residue arginine 220. Residues 220–222 (RDE) and glutamine 229 contribute to the ATP site. Histidine 443 serves as a coordination point for L-aspartate. Glutamate 477 contacts ATP. Arginine 484 lines the L-aspartate pocket. 529–532 (GLDR) serves as a coordination point for ATP.

Belongs to the class-II aminoacyl-tRNA synthetase family. Type 1 subfamily. Homodimer.

Its subcellular location is the cytoplasm. The catalysed reaction is tRNA(Asp) + L-aspartate + ATP = L-aspartyl-tRNA(Asp) + AMP + diphosphate. Functionally, catalyzes the attachment of L-aspartate to tRNA(Asp) in a two-step reaction: L-aspartate is first activated by ATP to form Asp-AMP and then transferred to the acceptor end of tRNA(Asp). The chain is Aspartate--tRNA ligase from Streptococcus pneumoniae serotype 4 (strain ATCC BAA-334 / TIGR4).